Consider the following 195-residue polypeptide: Protein RD3 (195 aa).

A coiled-coil region spans residues 22–54; sequence AEMVLETLMMELAGQMREVERQQRERRSAVRKI. Positions 168 to 177 are enriched in basic and acidic residues; sequence TISEDVERDA. A disordered region spans residues 168-195; it reads TISEDVERDAPPPPRTWSMPEFRAPQAD.

In terms of assembly, monomer. Interacts with GUCY2E; promotes the exit of GUCY2E from the endoplasmic reticulum and its trafficking to the photoreceptor outer segments. The interaction with GUCY2E negatively regulates its activity. Interacts with GUCY2F; promotes the exit of GUCY2F from the endoplasmic reticulum and its trafficking to the photoreceptor outer segments. The interaction with GUCY2F negatively regulates its activity. Interacts with GUK1; up-regulates GUK1 activity. In terms of tissue distribution, expressed in the retina and in particular in the inner nuclear layer, in rod and cone outer segments, in the outer nuclear layer, in the outer plexiform layer and in the ganglion cell layer.

It is found in the cell projection. The protein resides in the cilium. The protein localises to the photoreceptor outer segment. Its subcellular location is the photoreceptor inner segment. It localises to the endosome. It is found in the nucleus. The protein resides in the cytoplasm. The protein localises to the perinuclear region. In terms of biological role, plays a critical role in the regulation of enzymes involved in nucleotide cycle in photoreceptors. Inhibits the basal catalytic activity and the GCAP-stimulated activity of GUCY2E and GUCY2F, two retinal guanylyl cyclases involved in the production of cGMP in photoreceptors. Involved in the transport of GUCY2E and GUCY2F to their target sites in the photoreceptor outer segment. Up-regulates the activity of GUK1, a kinase that also plays an essential role for recycling GMP and indirectly, cGMP. Plays an important role for the survival of rods and cones in the retina. This Mus musculus (Mouse) protein is Protein RD3 (Rd3).